A 167-amino-acid chain; its full sequence is UPF0179 protein PAE0681 (167 aa).

Residues 142-167 (PSPSGSSISATSQGPSRAPPSRRLLK) are disordered. Over residues 145 to 157 (SGSSISATSQGPS) the composition is skewed to low complexity.

Belongs to the UPF0179 family.

The sequence is that of UPF0179 protein PAE0681 from Pyrobaculum aerophilum (strain ATCC 51768 / DSM 7523 / JCM 9630 / CIP 104966 / NBRC 100827 / IM2).